A 347-amino-acid polypeptide reads, in one-letter code: UDP-3-O-acylglucosamine N-acyltransferase (347 aa).

His-241 acts as the Proton acceptor in catalysis.

Belongs to the transferase hexapeptide repeat family. LpxD subfamily. Homotrimer.

It carries out the reaction a UDP-3-O-[(3R)-3-hydroxyacyl]-alpha-D-glucosamine + a (3R)-hydroxyacyl-[ACP] = a UDP-2-N,3-O-bis[(3R)-3-hydroxyacyl]-alpha-D-glucosamine + holo-[ACP] + H(+). It participates in bacterial outer membrane biogenesis; LPS lipid A biosynthesis. Catalyzes the N-acylation of UDP-3-O-acylglucosamine using 3-hydroxyacyl-ACP as the acyl donor. Is involved in the biosynthesis of lipid A, a phosphorylated glycolipid that anchors the lipopolysaccharide to the outer membrane of the cell. This is UDP-3-O-acylglucosamine N-acyltransferase from Neisseria gonorrhoeae (strain NCCP11945).